Reading from the N-terminus, the 429-residue chain is Glutamate-1-semialdehyde 2,1-aminomutase (429 aa).

An N6-(pyridoxal phosphate)lysine modification is found at Lys265.

This sequence belongs to the class-III pyridoxal-phosphate-dependent aminotransferase family. HemL subfamily. Homodimer. Pyridoxal 5'-phosphate is required as a cofactor.

It is found in the cytoplasm. The catalysed reaction is (S)-4-amino-5-oxopentanoate = 5-aminolevulinate. It functions in the pathway porphyrin-containing compound metabolism; protoporphyrin-IX biosynthesis; 5-aminolevulinate from L-glutamyl-tRNA(Glu): step 2/2. This Ectopseudomonas mendocina (strain ymp) (Pseudomonas mendocina) protein is Glutamate-1-semialdehyde 2,1-aminomutase.